The primary structure comprises 324 residues: Glyoxylate/hydroxypyruvate reductase B (324 aa).

Active-site residues include Arg237 and Glu266. The Proton donor role is filled by His285.

This sequence belongs to the D-isomer specific 2-hydroxyacid dehydrogenase family. GhrB subfamily. In terms of assembly, homodimer.

The protein resides in the cytoplasm. It carries out the reaction glycolate + NADP(+) = glyoxylate + NADPH + H(+). It catalyses the reaction (R)-glycerate + NAD(+) = 3-hydroxypyruvate + NADH + H(+). The catalysed reaction is (R)-glycerate + NADP(+) = 3-hydroxypyruvate + NADPH + H(+). Functionally, catalyzes the NADPH-dependent reduction of glyoxylate and hydroxypyruvate into glycolate and glycerate, respectively. The protein is Glyoxylate/hydroxypyruvate reductase B of Salmonella dublin (strain CT_02021853).